The chain runs to 968 residues: Isoleucine--tRNA ligase (968 aa).

Positions 68–78 (PYANGALHMGH) match the 'HIGH' region motif. Glutamate 582 provides a ligand contact to L-isoleucyl-5'-AMP. Positions 623–627 (KMSKS) match the 'KMSKS' region motif. ATP is bound at residue lysine 626. Cysteine 936, cysteine 939, cysteine 956, and cysteine 959 together coordinate Zn(2+).

It belongs to the class-I aminoacyl-tRNA synthetase family. IleS type 1 subfamily. Monomer. Zn(2+) is required as a cofactor.

The protein localises to the cytoplasm. It catalyses the reaction tRNA(Ile) + L-isoleucine + ATP = L-isoleucyl-tRNA(Ile) + AMP + diphosphate. In terms of biological role, catalyzes the attachment of isoleucine to tRNA(Ile). As IleRS can inadvertently accommodate and process structurally similar amino acids such as valine, to avoid such errors it has two additional distinct tRNA(Ile)-dependent editing activities. One activity is designated as 'pretransfer' editing and involves the hydrolysis of activated Val-AMP. The other activity is designated 'posttransfer' editing and involves deacylation of mischarged Val-tRNA(Ile). This is Isoleucine--tRNA ligase from Prochlorococcus marinus (strain MIT 9301).